Here is a 397-residue protein sequence, read N- to C-terminus: Tryptophan synthase beta chain (397 aa).

Residue Lys87 is modified to N6-(pyridoxal phosphate)lysine.

It belongs to the TrpB family. As to quaternary structure, tetramer of two alpha and two beta chains. Requires pyridoxal 5'-phosphate as cofactor.

The enzyme catalyses (1S,2R)-1-C-(indol-3-yl)glycerol 3-phosphate + L-serine = D-glyceraldehyde 3-phosphate + L-tryptophan + H2O. It functions in the pathway amino-acid biosynthesis; L-tryptophan biosynthesis; L-tryptophan from chorismate: step 5/5. In terms of biological role, the beta subunit is responsible for the synthesis of L-tryptophan from indole and L-serine. This chain is Tryptophan synthase beta chain, found in Escherichia coli O17:K52:H18 (strain UMN026 / ExPEC).